Reading from the N-terminus, the 748-residue chain is Photosystem I P700 chlorophyll a apoprotein A1 (748 aa).

8 consecutive transmembrane segments (helical) span residues 70 to 93, 156 to 179, 195 to 219, 291 to 309, 346 to 369, 385 to 411, 433 to 455, and 530 to 548; these read VFSAHFGQLAVIFIWISGMYFHGA, LYTTAIGGLVMAGLMLFAGWFHYH, LNHHLAGLLGLGSLAWAGHQIHVSM, TAHHHLAIAVLFLIAGHMY, WHAQLSLNLAMLGSLTIIVAHHMY, LSLFTHHMWIGGFCIVGAAAHAAIFMV, AIISHLNWACIFLGFHSFGLYIH, and FLVHHIHAFTIHVTVLILL. [4Fe-4S] cluster-binding residues include Cys572 and Cys581. A run of 2 helical transmembrane segments spans residues 588-609 and 662-684; these read HIFLGLFWMYNSLSIAIFHFSW and LSAYGLIFLGAHFVWAFSLMFLF. His673 is a chlorophyll a' binding site. Residues Met681 and Tyr689 each contribute to the chlorophyll a site. Trp690 provides a ligand contact to phylloquinone. Residues 722–742 traverse the membrane as a helical segment; sequence AVGVAHYLLGGIATTWAFFLA.

It belongs to the PsaA/PsaB family. As to quaternary structure, the PsaA/B heterodimer binds the P700 chlorophyll special pair and subsequent electron acceptors. PSI consists of a core antenna complex that captures photons, and an electron transfer chain that converts photonic excitation into a charge separation. The eukaryotic PSI reaction center is composed of at least 11 subunits. P700 is a chlorophyll a/chlorophyll a' dimer, A0 is one or more chlorophyll a, A1 is one or both phylloquinones and FX is a shared 4Fe-4S iron-sulfur center. is required as a cofactor.

The protein resides in the plastid. It is found in the chloroplast thylakoid membrane. It carries out the reaction reduced [plastocyanin] + hnu + oxidized [2Fe-2S]-[ferredoxin] = oxidized [plastocyanin] + reduced [2Fe-2S]-[ferredoxin]. PsaA and PsaB bind P700, the primary electron donor of photosystem I (PSI), as well as the electron acceptors A0, A1 and FX. PSI is a plastocyanin-ferredoxin oxidoreductase, converting photonic excitation into a charge separation, which transfers an electron from the donor P700 chlorophyll pair to the spectroscopically characterized acceptors A0, A1, FX, FA and FB in turn. Oxidized P700 is reduced on the lumenal side of the thylakoid membrane by plastocyanin. The polypeptide is Photosystem I P700 chlorophyll a apoprotein A1 (Chara vulgaris (Common stonewort)).